The primary structure comprises 396 residues: Putative ribosomal RNA large subunit methyltransferase YwbD (396 aa).

The region spanning 1–79 is the PUA domain; the sequence is MKLLTLKKAH…KHEQIDQAFF (79 aa).

Belongs to the methyltransferase superfamily. RlmI family.

The protein localises to the cytoplasm. This is Putative ribosomal RNA large subunit methyltransferase YwbD (ywbD) from Bacillus subtilis (strain 168).